Reading from the N-terminus, the 498-residue chain is uncharacterized protein (498 aa).

The signal sequence occupies residues 1 to 26; that stretch reads MEESSMAQASLICLLLSFSIIMLSNA. The Extracellular segment spans residues 27–441; sequence ADISIDCGSS…GEEKSSSNLA (415 aa). Asn-44, Asn-150, Asn-354, and Asn-357 each carry an N-linked (GlcNAc...) asparagine glycan. Positions 351–439 are disordered; that stretch reads GSGNGTNSTS…KSGEEKSSSN (89 aa). Residues 362–414 show a composition bias toward gly residues; sequence SGGGSPSPGGGSGSPPSTGGGSGSPPSTGGGGGSPSKGGGGGKSGGSNNGDGG. Basic and acidic residues predominate over residues 418–436; that stretch reads ASEDEKSADSSGKSGEEKS. The helical transmembrane segment at 442 to 462 threads the bilayer; it reads LPLGISLPTLLSLGAGGWGVW. The Cytoplasmic portion of the chain corresponds to 463–498; that stretch reads KYFIKPRRHPESELPLKQNISLQVNMGNATVVNAGQ.

The protein localises to the membrane. This is an uncharacterized protein from Arabidopsis thaliana (Mouse-ear cress).